A 635-amino-acid chain; its full sequence is Biosynthetic arginine decarboxylase (635 aa).

Lys100 carries the N6-(pyridoxal phosphate)lysine modification. Leu282–Tyr292 serves as a coordination point for substrate.

Belongs to the Orn/Lys/Arg decarboxylase class-II family. SpeA subfamily. It depends on Mg(2+) as a cofactor. The cofactor is pyridoxal 5'-phosphate.

The enzyme catalyses L-arginine + H(+) = agmatine + CO2. Its pathway is amine and polyamine biosynthesis; agmatine biosynthesis; agmatine from L-arginine: step 1/1. In terms of biological role, catalyzes the biosynthesis of agmatine from arginine. The sequence is that of Biosynthetic arginine decarboxylase from Trichlorobacter lovleyi (strain ATCC BAA-1151 / DSM 17278 / SZ) (Geobacter lovleyi).